Consider the following 242-residue polypeptide: Biosynthetic peptidoglycan transglycosylase (242 aa).

The helical transmembrane segment at 19 to 39 threads the bilayer; sequence LMVVLAVFWGGGIALFSVAPV.

The protein belongs to the glycosyltransferase 51 family.

Its subcellular location is the cell inner membrane. The enzyme catalyses [GlcNAc-(1-&gt;4)-Mur2Ac(oyl-L-Ala-gamma-D-Glu-L-Lys-D-Ala-D-Ala)](n)-di-trans,octa-cis-undecaprenyl diphosphate + beta-D-GlcNAc-(1-&gt;4)-Mur2Ac(oyl-L-Ala-gamma-D-Glu-L-Lys-D-Ala-D-Ala)-di-trans,octa-cis-undecaprenyl diphosphate = [GlcNAc-(1-&gt;4)-Mur2Ac(oyl-L-Ala-gamma-D-Glu-L-Lys-D-Ala-D-Ala)](n+1)-di-trans,octa-cis-undecaprenyl diphosphate + di-trans,octa-cis-undecaprenyl diphosphate + H(+). It participates in cell wall biogenesis; peptidoglycan biosynthesis. Its function is as follows. Peptidoglycan polymerase that catalyzes glycan chain elongation from lipid-linked precursors. This chain is Biosynthetic peptidoglycan transglycosylase, found in Shigella dysenteriae serotype 1 (strain Sd197).